Here is a 216-residue protein sequence, read N- to C-terminus: Adenylate kinase (216 aa).

Residue 10–15 participates in ATP binding; the sequence is GAGKGT. The interval 30-59 is NMP; it reads STGDMLRAAVKAGTKLGQQVQGIMAAGKLV. Residues threonine 31, arginine 36, 57-59, 85-88, and glutamine 92 each bind AMP; these read KLV and GFPR. Positions 122–159 are LID; that stretch reads GRRVHMPSGRIYHLKFNPPKITDKDDMTGESLTLRKDD. ATP contacts are provided by residues arginine 123 and 132-133; that span reads IY. AMP-binding residues include arginine 156 and arginine 167. Residue arginine 200 coordinates ATP.

It belongs to the adenylate kinase family. As to quaternary structure, monomer.

It is found in the cytoplasm. The enzyme catalyses AMP + ATP = 2 ADP. Its pathway is purine metabolism; AMP biosynthesis via salvage pathway; AMP from ADP: step 1/1. Catalyzes the reversible transfer of the terminal phosphate group between ATP and AMP. Plays an important role in cellular energy homeostasis and in adenine nucleotide metabolism. In Hamiltonella defensa subsp. Acyrthosiphon pisum (strain 5AT), this protein is Adenylate kinase.